Consider the following 179-residue polypeptide: Large ribosomal subunit protein uL5 (179 aa).

It belongs to the universal ribosomal protein uL5 family. In terms of assembly, part of the 50S ribosomal subunit; part of the 5S rRNA/L5/L18/L25 subcomplex. Contacts the 5S rRNA and the P site tRNA. Forms a bridge to the 30S subunit in the 70S ribosome.

This is one of the proteins that bind and probably mediate the attachment of the 5S RNA into the large ribosomal subunit, where it forms part of the central protuberance. In the 70S ribosome it contacts protein S13 of the 30S subunit (bridge B1b), connecting the 2 subunits; this bridge is implicated in subunit movement. Contacts the P site tRNA; the 5S rRNA and some of its associated proteins might help stabilize positioning of ribosome-bound tRNAs. The protein is Large ribosomal subunit protein uL5 of Thioalkalivibrio sulfidiphilus (strain HL-EbGR7).